The chain runs to 257 residues: Dihydroorotate dehydrogenase B (NAD(+)), electron transfer subunit (257 aa).

Residues 2–100 enclose the FAD-binding FR-type domain; it reads ILIEDLTVVS…MGPQGNGFDI (99 aa). FAD contacts are provided by residues 51–54, 68–70, and 75–76; these read RPIS, VYR, and GT. 4 residues coordinate [2Fe-2S] cluster: Cys-220, Cys-225, Cys-228, and Cys-244.

Belongs to the PyrK family. As to quaternary structure, heterotetramer of 2 PyrK and 2 PyrD type B subunits. Requires [2Fe-2S] cluster as cofactor. It depends on FAD as a cofactor.

It participates in pyrimidine metabolism; UMP biosynthesis via de novo pathway; orotate from (S)-dihydroorotate (NAD(+) route): step 1/1. Its function is as follows. Responsible for channeling the electrons from the oxidation of dihydroorotate from the FMN redox center in the PyrD type B subunit to the ultimate electron acceptor NAD(+). The polypeptide is Dihydroorotate dehydrogenase B (NAD(+)), electron transfer subunit (Streptococcus thermophilus (strain ATCC BAA-491 / LMD-9)).